Reading from the N-terminus, the 108-residue chain is Gibberellin-regulated protein 7 (108 aa).

The first 23 residues, 1-23 (MKIIVSILVLASLLLISSSLASA), serve as a signal peptide directing secretion.

The protein belongs to the GASA family. Six disulfide bonds may be present.

It localises to the secreted. Functionally, gibberellin-regulated protein that may function in hormonal controlled steps of development such as seed germination, flowering and seed maturation. The chain is Gibberellin-regulated protein 7 (GASA7) from Arabidopsis thaliana (Mouse-ear cress).